The chain runs to 100 residues: Small ribosomal subunit protein uS14c (100 aa).

This sequence belongs to the universal ribosomal protein uS14 family. In terms of assembly, part of the 30S ribosomal subunit.

The protein resides in the plastid. It localises to the chloroplast. Functionally, binds 16S rRNA, required for the assembly of 30S particles. The polypeptide is Small ribosomal subunit protein uS14c (Carica papaya (Papaya)).